The primary structure comprises 764 residues: Reticulon-1 (764 aa).

Disordered regions lie at residues M1–L37, P115–E147, L247–E400, and E455–M475. Residues V261–G282 show a composition bias toward polar residues. Positions E328–E337 are enriched in basic and acidic residues. In terms of domain architecture, Reticulon spans A578–E764. 2 consecutive transmembrane segments (helical) span residues F607–F627 and V696–M716.

It is found in the endoplasmic reticulum membrane. The protein localises to the nucleus. Inhibits amyloid precursor protein processing, probably by blocking BACE1 activity. This is Reticulon-1 from Xenopus tropicalis (Western clawed frog).